The primary structure comprises 270 residues: 5'-AMP-activated protein kinase subunit beta-1 (270 aa).

Residues 1-46 (MGNTSSERAALERHGGHKTPRRDSSGGTKDGDRPKILMDSPEDADL) form a disordered region. Gly2 carries N-myristoyl glycine lipidation. Thr4 carries the phosphothreonine modification. Ser5 and Ser6 each carry phosphoserine. The residue at position 19 (Thr19) is a Phosphothreonine. Basic and acidic residues predominate over residues 21-36 (RRDSSGGTKDGDRPKI). Ser24 and Ser25 each carry phosphoserine; by autocatalysis. 3 positions are modified to phosphoserine: Ser40, Ser96, and Ser101. Residues 68–163 (EVNDKAPAQA…QVKKTDFEVF (96 aa)) form a glycogen-binding domain region. Residue Ser108 is modified to Phosphoserine; by autocatalysis. Thr148 carries the phosphothreonine modification. The residue at position 182 (Ser182) is a Phosphoserine.

The protein belongs to the 5'-AMP-activated protein kinase beta subunit family. AMPK is a heterotrimer of an alpha catalytic subunit (PRKAA1 or PRKAA2), a beta (PRKAB1 or PRKAB2) and a gamma non-catalytic subunits (PRKAG1, PRKAG2 or PRKAG3). Interacts with FNIP1 and FNIP2. In terms of processing, phosphorylated when associated with the catalytic subunit (PRKAA1 or PRKAA2). Phosphorylated by ULK1; leading to negatively regulate AMPK activity and suggesting the existence of a regulatory feedback loop between ULK1 and AMPK.

In terms of biological role, non-catalytic subunit of AMP-activated protein kinase (AMPK), an energy sensor protein kinase that plays a key role in regulating cellular energy metabolism. In response to reduction of intracellular ATP levels, AMPK activates energy-producing pathways and inhibits energy-consuming processes: inhibits protein, carbohydrate and lipid biosynthesis, as well as cell growth and proliferation. AMPK acts via direct phosphorylation of metabolic enzymes, and by longer-term effects via phosphorylation of transcription regulators. Also acts as a regulator of cellular polarity by remodeling the actin cytoskeleton; probably by indirectly activating myosin. Beta non-catalytic subunit acts as a scaffold on which the AMPK complex assembles, via its C-terminus that bridges alpha (PRKAA1 or PRKAA2) and gamma subunits (PRKAG1, PRKAG2 or PRKAG3). The sequence is that of 5'-AMP-activated protein kinase subunit beta-1 (PRKAB1) from Pongo abelii (Sumatran orangutan).